A 191-amino-acid polypeptide reads, in one-letter code: MLTETLTMKYTATKFRVRTNKRLRSQKYPEKHSDFLGCSSTKSSFGLNMLLTKPNKFQIPPPHPVLLKRIREERMKLTSSFESGINIIDIETSWEIDKFISHHFNTSIGNVLKSKSSSKKRPMNAFMAFRTYYAQLGTGLKQNTLSVILSEAWNAPETDQNIWDIFAQQFNFASPRCGFVNYIMAHASSAP.

The segment at residues 118 to 174 is a DNA-binding region (alpha box); that stretch reads SKKRPMNAFMAFRTYYAQLGTGLKQNTLSVILSEAWNAPETDQNIWDIFAQQFNFAS.

It belongs to the MATALPHA1 family.

Its subcellular location is the nucleus. Its function is as follows. Mating type proteins are sequence specific DNA-binding proteins that act as master switches in yeast differentiation by controlling gene expression in a cell type-specific fashion. Transcriptional activator that induces the transcription of alpha-specific genes. The chain is Mating-type-like protein ALPHA1 (MTL1ALPHA1) from Candida glabrata (strain ATCC 2001 / BCRC 20586 / JCM 3761 / NBRC 0622 / NRRL Y-65 / CBS 138) (Yeast).